Reading from the N-terminus, the 398-residue chain is MKRSVRPLFSALLFAFFAATLICRVAIRRSSFSFASAIAELGSSGLMTEDIVFNETLLEFAAIDPGEPNFKQEVDLISDYDHTRRSHRRHFSSMSIRPSEQQRRVSRDIASSSKFPVTLRSSQAYRYWSEFKRNLRLWARRRAYEPNIMLDLIRLVKNPIDVHNGVVSISSERYLSCAVVGNSGTLLNSQYGDLIDKHEIVIRLNNAKTERFEKKVGSKTNISFINSNILHQCGRRESCYCHPYGETVPIVMYICQPIHVLDYTLCKPSHRAPLLITDPRFDVMCARIVKYYSVKKFLEEKKAKGFVDWSKDHEGSLFHYSSGMQAVMLAVGICEKVSVFGFGKLNSTKHHYHTNQKAELKLHDYEAEYRLYRDLENSPRAIPFLPKEFKIPLVQVYH.

At methionine 1–arginine 6 the chain is on the cytoplasmic side. A helical; Signal-anchor for type II membrane protein transmembrane segment spans residues proline 7–isoleucine 27. The Lumenal segment spans residues arginine 28–histidine 398. 2 N-linked (GlcNAc...) asparagine glycosylation sites follow: asparagine 221 and asparagine 346.

It belongs to the glycosyltransferase 29 family. As to quaternary structure, interacts with GALT31A.

The protein localises to the golgi apparatus membrane. Its function is as follows. Galactosyltransferase involved in the biosynthesis of type II arabinogalactan. Possesses galactosyltransferase (GalT) activity in vitro, transferring galactose from UDP-galactose to a mixture of various oligosaccharides derived from arabinogalactan proteins. Forms a complex with GALT31A that can work cooperatively to enhance the activities of adding galactose residues at O6 positions to beta-1,6-galactan and beta-1,3-galactan. The polypeptide is Beta-1,6-galactosyltransferase GALT29A (Arabidopsis thaliana (Mouse-ear cress)).